We begin with the raw amino-acid sequence, 112 residues long: Integration host factor subunit alpha (112 aa).

The protein belongs to the bacterial histone-like protein family. In terms of assembly, heterodimer of an alpha and a beta chain.

Functionally, this protein is one of the two subunits of integration host factor, a specific DNA-binding protein that functions in genetic recombination as well as in transcriptional and translational control. In Rhizobium rhizogenes (strain K84 / ATCC BAA-868) (Agrobacterium radiobacter), this protein is Integration host factor subunit alpha.